The following is a 243-amino-acid chain: Uridylate kinase (243 aa).

Residue 15–18 (KLSG) coordinates ATP. Residues 23-28 (GEEGFG) are involved in allosteric activation by GTP. Glycine 57 lines the UMP pocket. Positions 58 and 62 each coordinate ATP. Residues aspartate 77 and 138 to 145 (TGNPFFTT) each bind UMP. ATP contacts are provided by threonine 165, phenylalanine 171, and aspartate 174.

Belongs to the UMP kinase family. As to quaternary structure, homohexamer.

The protein resides in the cytoplasm. The catalysed reaction is UMP + ATP = UDP + ADP. Its pathway is pyrimidine metabolism; CTP biosynthesis via de novo pathway; UDP from UMP (UMPK route): step 1/1. Allosterically activated by GTP. Inhibited by UTP. Functionally, catalyzes the reversible phosphorylation of UMP to UDP. The chain is Uridylate kinase from Vibrio campbellii (strain ATCC BAA-1116).